The sequence spans 141 residues: Protein nfe1 (141 aa).

It to the N-terminal of nitrogenase iron protein (NifH). Has lost the ATP-binding site.

In terms of biological role, responsible for the nodulation efficiency and competitive ability of strain GR4 on alfalfa roots. This chain is Protein nfe1 (nfe1), found in Rhizobium meliloti (Ensifer meliloti).